We begin with the raw amino-acid sequence, 448 residues long: Exodeoxyribonuclease 7 large subunit (448 aa).

This sequence belongs to the XseA family. As to quaternary structure, heterooligomer composed of large and small subunits.

It localises to the cytoplasm. The enzyme catalyses Exonucleolytic cleavage in either 5'- to 3'- or 3'- to 5'-direction to yield nucleoside 5'-phosphates.. Bidirectionally degrades single-stranded DNA into large acid-insoluble oligonucleotides, which are then degraded further into small acid-soluble oligonucleotides. The protein is Exodeoxyribonuclease 7 large subunit of Photobacterium profundum (strain SS9).